A 101-amino-acid polypeptide reads, in one-letter code: uncharacterized protein (101 aa).

This is an uncharacterized protein from Cupriavidus necator (strain ATCC 17699 / DSM 428 / KCTC 22496 / NCIMB 10442 / H16 / Stanier 337) (Ralstonia eutropha).